The following is a 546-amino-acid chain: 2-succinyl-5-enolpyruvyl-6-hydroxy-3-cyclohexene-1-carboxylate synthase (546 aa).

It belongs to the TPP enzyme family. MenD subfamily. As to quaternary structure, homodimer. Mg(2+) is required as a cofactor. Mn(2+) serves as cofactor. The cofactor is thiamine diphosphate.

The enzyme catalyses isochorismate + 2-oxoglutarate + H(+) = 5-enolpyruvoyl-6-hydroxy-2-succinyl-cyclohex-3-ene-1-carboxylate + CO2. Its pathway is quinol/quinone metabolism; 1,4-dihydroxy-2-naphthoate biosynthesis; 1,4-dihydroxy-2-naphthoate from chorismate: step 2/7. The protein operates within quinol/quinone metabolism; menaquinone biosynthesis. Its function is as follows. Catalyzes the thiamine diphosphate-dependent decarboxylation of 2-oxoglutarate and the subsequent addition of the resulting succinic semialdehyde-thiamine pyrophosphate anion to isochorismate to yield 2-succinyl-5-enolpyruvyl-6-hydroxy-3-cyclohexene-1-carboxylate (SEPHCHC). The chain is 2-succinyl-5-enolpyruvyl-6-hydroxy-3-cyclohexene-1-carboxylate synthase from Mycolicibacterium smegmatis (strain ATCC 700084 / mc(2)155) (Mycobacterium smegmatis).